The primary structure comprises 102 residues: RNA-binding protein Hfq (102 aa).

The 60-residue stretch at 9 to 68 (DPFLNALRRERVPVSIYLVNGIKLQGQIESFDQFVILLKNTVSQMVYKHAISTVVPSRPV) folds into the Sm domain. Residues 63-102 (VPSRPVSHHSNNAGGGSSNYHHGGSAQGSSAPQQDSDDAE) are disordered. Low complexity predominate over residues 70–86 (HHSNNAGGGSSNYHHGG).

Belongs to the Hfq family. As to quaternary structure, homohexamer.

RNA chaperone that binds small regulatory RNA (sRNAs) and mRNAs to facilitate mRNA translational regulation in response to envelope stress, environmental stress and changes in metabolite concentrations. Also binds with high specificity to tRNAs. This Klebsiella pneumoniae (strain 342) protein is RNA-binding protein Hfq.